Reading from the N-terminus, the 356-residue chain is Non-functional pseudokinase ZRK15 (356 aa).

The 295-residue stretch at 62–356 (NRVSELFDEI…SSSSCGETSL (295 aa)) folds into the Protein kinase domain. ATP-binding positions include 68-76 (FDEIPYDWY) and Lys94.

It belongs to the protein kinase superfamily. Ser/Thr protein kinase family. ZRK subfamily. In terms of assembly, interacts with RPP13L4/ZAR1.

In Arabidopsis thaliana (Mouse-ear cress), this protein is Non-functional pseudokinase ZRK15.